The sequence spans 296 residues: uncharacterized protein (296 aa).

6 helical membrane-spanning segments follow: residues 10-29 (FSTLIILGITLGIDLIFSLL), 36-58 (YIVLRILEIFIVFFNIYQLYYIL), 112-131 (FFALGTFSVNDIGIVNMFVT), 188-210 (ILIFLISIVILMVTIIPFILYLR), 241-260 (MMYGAYNMIIFFCIYYSAYF), and 273-295 (MYISFLVAFIFLIFQFKIYVTYI).

Its subcellular location is the cell membrane. This is an uncharacterized protein from Clostridium acetobutylicum (strain ATCC 824 / DSM 792 / JCM 1419 / IAM 19013 / LMG 5710 / NBRC 13948 / NRRL B-527 / VKM B-1787 / 2291 / W).